We begin with the raw amino-acid sequence, 135 residues long: Protein E6 (135 aa).

2 zinc fingers span residues 23 to 59 and 96 to 132; these read CTFC…CTAC and CRVC…CRIC.

It belongs to the papillomaviridae E6 protein family. In terms of assembly, forms homodimers. Interacts with ubiquitin-protein ligase UBE3A/E6-AP; this interaction stimulates UBE3A ubiquitin activity. Interacts with host BAK1.

It is found in the host cytoplasm. Its subcellular location is the host nucleus. In terms of biological role, plays a major role in the induction and maintenance of cellular transformation. E6 associates with host UBE3A/E6-AP ubiquitin-protein ligase and modulates its activity. Protects host keratinocytes from apoptosis by mediating the degradation of host BAK1. May also inhibit host immune response. The protein is Protein E6 of Mastomys natalensis papillomavirus (isolate African multimammate rat) (MnPV).